An 819-amino-acid polypeptide reads, in one-letter code: Probable beta-glucosidase G (819 aa).

An N-terminal signal peptide occupies residues 1–20; the sequence is MTSASQILVWGLLAASGAQA. Residues Asn41, Asn59, Asn107, Asn228, and Asn277 are each glycosylated (N-linked (GlcNAc...) asparagine). The active site involves Asp305. 12 N-linked (GlcNAc...) asparagine glycosylation sites follow: Asn337, Asn344, Asn351, Asn403, Asn500, Asn509, Asn554, Asn567, Asn588, Asn627, Asn683, and Asn719.

It belongs to the glycosyl hydrolase 3 family.

The protein resides in the secreted. It carries out the reaction Hydrolysis of terminal, non-reducing beta-D-glucosyl residues with release of beta-D-glucose.. Its pathway is glycan metabolism; cellulose degradation. In terms of biological role, beta-glucosidases are one of a number of cellulolytic enzymes involved in the degradation of cellulosic biomass. Catalyzes the last step releasing glucose from the inhibitory cellobiose. This is Probable beta-glucosidase G (bglG) from Emericella nidulans (strain FGSC A4 / ATCC 38163 / CBS 112.46 / NRRL 194 / M139) (Aspergillus nidulans).